Consider the following 358-residue polypeptide: Protein FAM50 homolog (358 aa).

Positions 104 to 113 are enriched in basic and acidic residues; the sequence is AKLAEKDRQK. The interval 104–151 is disordered; that stretch reads AKLAEKDRQKRQIQALSFDPDDEPDGDDANDGDEGSGKESEKEDVKEE. Acidic residues predominate over residues 122–137; the sequence is DPDDEPDGDDANDGDE. A compositionally biased stretch (basic and acidic residues) spans 138 to 151; that stretch reads GSGKESEKEDVKEE.

It belongs to the FAM50 family.

The protein is Protein FAM50 homolog of Anopheles gambiae (African malaria mosquito).